Reading from the N-terminus, the 70-residue chain is DNA-directed RNA polymerases I, II, and III subunit rpabc5 (70 aa).

4 residues coordinate Zn(2+): Cys7, Cys10, Cys44, and Cys45.

It belongs to the archaeal Rpo10/eukaryotic RPB10 RNA polymerase subunit family. In terms of assembly, component of the RNA polymerase I (Pol I), RNA polymerase II (Pol II) and RNA polymerase III (Pol III) complexes.

It localises to the nucleus. In terms of biological role, DNA-dependent RNA polymerase catalyzes the transcription of DNA into RNA using the four ribonucleoside triphosphates as substrates. Common component of RNA polymerases I, II and III which synthesize ribosomal RNA precursors, mRNA precursors and many functional non-coding RNAs, and a small RNAs, such as 5S rRNA and tRNAs, respectively. Pol II is the central component of the basal RNA polymerase II transcription machinery. Pols are composed of mobile elements that move relative to each other. In Pol II, RBP10 is part of the core element with the central large cleft. The protein is DNA-directed RNA polymerases I, II, and III subunit rpabc5 (polr2l) of Dictyostelium discoideum (Social amoeba).